A 196-amino-acid polypeptide reads, in one-letter code: dTTP/UTP pyrophosphatase (196 aa).

The active-site Proton acceptor is the aspartate 78.

Belongs to the Maf family. YhdE subfamily. It depends on a divalent metal cation as a cofactor.

The protein localises to the cytoplasm. It catalyses the reaction dTTP + H2O = dTMP + diphosphate + H(+). It carries out the reaction UTP + H2O = UMP + diphosphate + H(+). Its function is as follows. Nucleoside triphosphate pyrophosphatase that hydrolyzes dTTP and UTP. May have a dual role in cell division arrest and in preventing the incorporation of modified nucleotides into cellular nucleic acids. This chain is dTTP/UTP pyrophosphatase, found in Photobacterium profundum (strain SS9).